The primary structure comprises 976 residues: Receptor-like protein 14 (976 aa).

An N-terminal signal peptide occupies residues 1-26 (MERKVFSGQNLIWVMLLLVQLRGYKC). Residues 27–928 (CIEKERKALL…DDDDEAAIDM (902 aa)) lie on the Extracellular side of the membrane. Residues Asn-60, Asn-75, Asn-98, Asn-112, Asn-151, Asn-185, and Asn-200 are each glycosylated (N-linked (GlcNAc...) asparagine). 17 LRR repeats span residues 105 to 127 (FEEL…LFDD), 137 to 160 (LRNL…FLNA), 162 to 185 (TSLT…ELKN), 186 to 209 (LTKL…FTHL), 210 to 233 (EKLK…ELKV), 234 to 258 (LTNL…VFCE), 260 to 283 (KNLR…LGNL), 284 to 306 (NKLR…SFNS), 308 to 331 (ESLE…PLAN), 333 to 358 (TKLK…WLPK), 359 to 381 (FQLT…LVYQ), 382 to 405 (TNLR…LLEN), 407 to 428 (PELK…PTIV), 429 to 452 (HKLQ…IGHV), 454 to 477 (PRLL…MGEM), 478 to 501 (NDIS…LLTG), and 503 to 528 (FSLI…RLTS). Asn-331 carries N-linked (GlcNAc...) asparagine glycosylation. An N-linked (GlcNAc...) asparagine glycan is attached at Asn-416. 2 N-linked (GlcNAc...) asparagine glycosylation sites follow: Asn-460 and Asn-489. Residues 530–549 (IVLRMHNNLFTGEIGVGLRT) form an LRR 18; degenerate repeat. LRR repeat units lie at residues 550-573 (LVNL…SIPP), 575-599 (SSHL…LLAI), 600-623 (HHLN…VVNS), 625-645 (YGIK…VTLL), 646-669 (ENAY…VNTG), 671-692 (MITL…LCDL), 693-715 (TSIR…CLNH), 782-805 (LDYM…ELGD), 806-829 (LSKL…NFSK), 831-854 (KDIE…LTNL), and 856-879 (SLAV…QFNT). Residue Asn-552 is glycosylated (N-linked (GlcNAc...) asparagine). Asn-633 is a glycosylation site (N-linked (GlcNAc...) asparagine). Residue Asn-680 is glycosylated (N-linked (GlcNAc...) asparagine). Residues Asn-813, Asn-826, Asn-853, Asn-861, and Asn-866 are each glycosylated (N-linked (GlcNAc...) asparagine). The interval 897–922 (DRSCEGKKNTKEADNGGEEEEEDDDD) is disordered. Residues 898–910 (RSCEGKKNTKEAD) are compositionally biased toward basic and acidic residues. The segment covering 911–922 (NGGEEEEEDDDD) has biased composition (acidic residues). A helical membrane pass occupies residues 929 to 949 (VVLYWTTGSTYAIALIGILVL). The Cytoplasmic segment spans residues 950 to 976 (MCFDCPWRRTWLCIVDAFIASGKSMFS).

Belongs to the RLP family.

Its subcellular location is the cell membrane. In Arabidopsis thaliana (Mouse-ear cress), this protein is Receptor-like protein 14.